Here is a 148-residue protein sequence, read N- to C-terminus: General odorant-binding protein 69a (148 aa).

A signal peptide spans 1–23 (MVARHFSFFLALLILYDLIPSNQ). 3 cysteine pairs are disulfide-bonded: Cys42–Cys74, Cys70–Cys121, and Cys112–Cys130.

Belongs to the PBP/GOBP family. Expressed in the antenna, mostly on the anterior surface of the third antennal segment. Expressed in auxiliary cells and the third antennal segment and exported to the sensillar lymph (at protein level).

Its subcellular location is the secreted. Its function is as follows. Odorant-binding protein required for olfactory behavior and activity of pheromone-sensitive neurons in response to the male-specific pheromone cis-vaccenyl acetate (cVA). Modulates social responsivity differently in males and females, regulating male aggression and female receptivity respectively. The sequence is that of General odorant-binding protein 69a (Obp69a) from Drosophila melanogaster (Fruit fly).